The sequence spans 564 residues: Proline--tRNA ligase (564 aa).

The protein belongs to the class-II aminoacyl-tRNA synthetase family. ProS type 1 subfamily. In terms of assembly, homodimer.

It localises to the cytoplasm. The catalysed reaction is tRNA(Pro) + L-proline + ATP = L-prolyl-tRNA(Pro) + AMP + diphosphate. Functionally, catalyzes the attachment of proline to tRNA(Pro) in a two-step reaction: proline is first activated by ATP to form Pro-AMP and then transferred to the acceptor end of tRNA(Pro). As ProRS can inadvertently accommodate and process non-cognate amino acids such as alanine and cysteine, to avoid such errors it has two additional distinct editing activities against alanine. One activity is designated as 'pretransfer' editing and involves the tRNA(Pro)-independent hydrolysis of activated Ala-AMP. The other activity is designated 'posttransfer' editing and involves deacylation of mischarged Ala-tRNA(Pro). The misacylated Cys-tRNA(Pro) is not edited by ProRS. The chain is Proline--tRNA ligase from Bacillus velezensis (strain DSM 23117 / BGSC 10A6 / LMG 26770 / FZB42) (Bacillus amyloliquefaciens subsp. plantarum).